A 385-amino-acid chain; its full sequence is MSRPQLRRWRLVSSPPSGVPGLALLALLALLALRLAAGTDCPCPEPELCRPIRHHPDFEVFVFDVGQKTWKSYDWSQITTVATFGKYDSELMCYAHSKGARVVLKGDVSLKDIIDPAFRASWIAQKLNLAKTQYMDGINIDIEQEVNCLSPEYDALTALVKETTDSFHREIEGSQVTFDVAWSPKNIDRRCYNYTGIADACDFLFVMSYDEQSQIWSECIAAANAPYNQTLTGYNDYIKMSINPKKLVMGVPWYGYDYTCLNLSEDHVCTIAKVPFRGAPCSDAAGRQVPYKTIMKQINSSISGNLWDKDQRAPYYNYKDPAGHFHQVWYDNPQSISLKATYIQNYRLRGIGMWNANCLDYSGDAVAKQQTEEMWEVLKPKLLQR.

The first 38 residues, 1–38, serve as a signal peptide directing secretion; it reads MSRPQLRRWRLVSSPPSGVPGLALLALLALLALRLAAG. The GH18 domain occupies 39–385; it reads TDCPCPEPEL…EVLKPKLLQR (347 aa). Residue Glu-143 is the Proton donor of the active site. Residues Asn-193, Asn-228, Asn-262, and Asn-299 are each glycosylated (N-linked (GlcNAc...) asparagine).

The protein belongs to the glycosyl hydrolase 18 family.

Its subcellular location is the lysosome. Its function is as follows. Involved in the degradation of asparagine-linked glycoproteins. Hydrolyze of N-acetyl-beta-D-glucosamine (1-4)N-acetylglucosamine chitobiose core from the reducing end of the bond, it requires prior cleavage by glycosylasparaginase. The polypeptide is Di-N-acetylchitobiase (CTBS) (Homo sapiens (Human)).